The chain runs to 135 residues: Ribosome-binding factor A (135 aa).

Belongs to the RbfA family. As to quaternary structure, monomer. Binds 30S ribosomal subunits, but not 50S ribosomal subunits or 70S ribosomes.

It is found in the cytoplasm. One of several proteins that assist in the late maturation steps of the functional core of the 30S ribosomal subunit. Associates with free 30S ribosomal subunits (but not with 30S subunits that are part of 70S ribosomes or polysomes). Required for efficient processing of 16S rRNA. May interact with the 5'-terminal helix region of 16S rRNA. The chain is Ribosome-binding factor A from Dinoroseobacter shibae (strain DSM 16493 / NCIMB 14021 / DFL 12).